A 255-amino-acid polypeptide reads, in one-letter code: tRNA pseudouridine synthase B (255 aa).

Aspartate 52 (nucleophile) is an active-site residue. Substrate-binding residues include tyrosine 80, tyrosine 183, and leucine 204.

It belongs to the pseudouridine synthase TruB family. Type 1 subfamily.

It carries out the reaction uridine(55) in tRNA = pseudouridine(55) in tRNA. Its function is as follows. Responsible for synthesis of pseudouridine from uracil-55 in the psi GC loop of transfer RNAs. The protein is tRNA pseudouridine synthase B of Blochmanniella floridana.